A 572-amino-acid polypeptide reads, in one-letter code: Moesin (572 aa).

The region spanning 1-294 (MPRGVAVRVT…GNHELYMRRR (294 aa)) is the FERM domain. Disordered stretches follow at residues 444 to 508 (SQER…SYLP) and 523 to 544 (LQAM…QENI). Residues 454 to 475 (AQEAAAAQHAAQLAAQREAQQL) show a composition bias toward low complexity. Positions 480–502 (EGEEDEQDHELEVQQDDNDDLDD) are enriched in acidic residues. A compositionally biased stretch (basic and acidic residues) spans 525 to 544 (AMKDESKGEDRYDKIHQENI).

Its subcellular location is the cell membrane. It localises to the cytoplasm. The protein resides in the cytoskeleton. It is found in the cell projection. Functionally, probably involved in connections of major cytoskeletal structures to the plasma membrane. This is Moesin from Lytechinus variegatus (Green sea urchin).